Reading from the N-terminus, the 89-residue chain is Small ribosomal subunit protein uS15 (89 aa).

The protein belongs to the universal ribosomal protein uS15 family. In terms of assembly, part of the 30S ribosomal subunit. Forms a bridge to the 50S subunit in the 70S ribosome, contacting the 23S rRNA.

In terms of biological role, one of the primary rRNA binding proteins, it binds directly to 16S rRNA where it helps nucleate assembly of the platform of the 30S subunit by binding and bridging several RNA helices of the 16S rRNA. Forms an intersubunit bridge (bridge B4) with the 23S rRNA of the 50S subunit in the ribosome. In Blochmanniella pennsylvanica (strain BPEN), this protein is Small ribosomal subunit protein uS15.